The following is a 200-amino-acid chain: Guanylate kinase (200 aa).

The 179-residue stretch at 6–184 (GLLIVLSGPS…AVDKLKSILL (179 aa)) folds into the Guanylate kinase-like domain. ATP is bound at residue 13–20 (GPSGAGKG).

Belongs to the guanylate kinase family.

The protein localises to the cytoplasm. It carries out the reaction GMP + ATP = GDP + ADP. In terms of biological role, essential for recycling GMP and indirectly, cGMP. The protein is Guanylate kinase of Desulfitobacterium hafniense (strain Y51).